Reading from the N-terminus, the 29-residue chain is Snaclec multactivase regulatory subunit (29 aa).

Positions 1-29 (DCLPGWSVYEGRCYKVFNQKTWKAAEKFC) constitute a C-type lectin domain. Residues Cys2 and Cys13 are joined by a disulfide bond.

This sequence belongs to the snaclec family. Heterodimer of a metalloproteinase subunit and a regulatory subunit comprising two homologous polypeptides disulfide-linked. In terms of tissue distribution, expressed by the venom gland.

It localises to the secreted. Multactivase, a carinactivase-like calcium-dependent prothrombin activator, activates prothrombin via recognition of the calcium ion bound conformation of its gamma-carboxyglutamic acid (GLA) domain, and the subsequent conversion of prothrombin to active thrombin is catalyzed by the catalytic subunit. The protein is Snaclec multactivase regulatory subunit of Echis multisquamatus (Central Asian sand viper).